The primary structure comprises 550 residues: MTLPIQVLPQDVIDLIAAGEVIDSLGAVVRELVENAIDAGADRITIDISPQNWRIQVSDNGRGMSREDLQLCSYAHSTSKIRQRDDLWQITSLGFRGEALHSIAQVAHLRVASRHDDDLGCYCLYNHQGEPGNLETIPIAIGTIVTVENLFGNFPVRRQALPSINKQLKDIQTLIHNFALCHPQITWQVFQDHQDWLRISPGKDASQILPQLVKSLHFNDLASLKLDLTTPDAESAQIELVIGLPDRISRHQPDWVRIAVNGRMVRSSELEQAIFEAFARTVPKDRYPVCFLHLHLNPRSIDWNRHPAKAEIYLHNLIFWQEQIISAIDKALGLNPEHIPEKAQNQRVSQILKAAEEKSTYTIGEKSPKNRLELKAVAQIHQTYIVAEHPHGLWLVEQHIAHERVLYERLEDNWEIVPLDTPIILNQLTTRQIEQLQRLGLEIASFGDRSWAIRSIPVLLKEREDRADALLELSLGGDLQTAQVATACRSAIRNGTALSLKEMQNLLDDWQNTRNPRTCPHGRPIYLSLEETSLARFFRRHWVIGKSHGI.

The protein belongs to the DNA mismatch repair MutL/HexB family.

Its function is as follows. This protein is involved in the repair of mismatches in DNA. It is required for dam-dependent methyl-directed DNA mismatch repair. May act as a 'molecular matchmaker', a protein that promotes the formation of a stable complex between two or more DNA-binding proteins in an ATP-dependent manner without itself being part of a final effector complex. The sequence is that of DNA mismatch repair protein MutL from Microcystis aeruginosa (strain NIES-843 / IAM M-2473).